The primary structure comprises 375 residues: Alcohol dehydrogenase 1 (375 aa).

Position 2 is an N-acetylserine (Ser-2). Residues Cys-47, His-68, Cys-98, Cys-101, Cys-104, Cys-112, and Cys-175 each coordinate Zn(2+). NAD(+) contacts are provided by residues 200-205 (WSGRVG), Asp-224, and Lys-229. Lys-234 is modified (N6-succinyllysine). 293–295 (VGV) provides a ligand contact to NAD(+). Position 340 is an N6-succinyllysine (Lys-340). An NAD(+)-binding site is contributed by Arg-370.

The protein belongs to the zinc-containing alcohol dehydrogenase family. Class-I subfamily. As to quaternary structure, homodimer. Requires Zn(2+) as cofactor.

It localises to the cytoplasm. The catalysed reaction is a primary alcohol + NAD(+) = an aldehyde + NADH + H(+). It catalyses the reaction a secondary alcohol + NAD(+) = a ketone + NADH + H(+). This chain is Alcohol dehydrogenase 1 (ADH1), found in Geomys bursarius (Plains pocket gopher).